A 98-amino-acid chain; its full sequence is Protein E7 (98 aa).

The segment at 1 to 37 (MKGQDVTLKNVAVELEDVVSPIILDCEEEIETEEVDC) is E7 terminal domain. The LXCXE motif; interaction with host RB1 and TMEM173/STING signature appears at 24–28 (LDCEE). The segment at 47–83 (CYVCENPLRLALVSSPDGIHQLHQLLLDCISLLCANC) is a zinc-finger region. Positions 65-73 (IHQLHQLLL) match the Nuclear export signal motif.

It belongs to the papillomaviridae E7 protein family. As to quaternary structure, homodimer. Homooligomer. Interacts with host RB1; this interaction induces dissociation of RB1-E2F1 complex thereby disrupting RB1 activity. Interacts with host EP300; this interaction represses EP300 transcriptional activity. Interacts with protein E2; this interaction inhibits E7 oncogenic activity. Interacts with host TMEM173/STING; this interaction impairs the ability of TMEM173/STING to sense cytosolic DNA and promote the production of type I interferon (IFN-alpha and IFN-beta). Post-translationally, highly phosphorylated.

It is found in the host cytoplasm. The protein localises to the host nucleus. Plays a role in viral genome replication by driving entry of quiescent cells into the cell cycle. Stimulation of progression from G1 to S phase allows the virus to efficiently use the cellular DNA replicating machinery to achieve viral genome replication. E7 protein has both transforming and trans-activating activities. Induces the disassembly of the E2F1 transcription factor from RB1, with subsequent transcriptional activation of E2F1-regulated S-phase genes. Interferes with host histone deacetylation mediated by HDAC1 and HDAC2, leading to transcription activation. Also plays a role in the inhibition of both antiviral and antiproliferative functions of host interferon alpha. Interaction with host TMEM173/STING impairs the ability of TMEM173/STING to sense cytosolic DNA and promote the production of type I interferon (IFN-alpha and IFN-beta). The chain is Protein E7 from Bovine papillomavirus type 3.